The sequence spans 273 residues: uncharacterized protein (273 aa).

The chain crosses the membrane as a helical span at residues 7 to 25; it reads FFRWAFLIATVYVAYYFLV. 2 disordered regions span residues 34–154 and 168–273; these read KPQK…LKMK and LHNS…DSLW. Residues 36-54 show a composition bias toward basic residues; it reads QKSKLTKLGKQKQRQKQKN. Residues 55-91 are compositionally biased toward basic and acidic residues; sequence TKKDTLVNRETPSKKSQKLETSDALKSKSKDSSKKEP. A compositionally biased stretch (low complexity) spans 92 to 101; sequence VVVPKKGTPK. The segment covering 115 to 144 has biased composition (basic and acidic residues); it reads PKKEKLVGKNPAEKEDTTDVEDTQKLEQKH. A compositionally biased stretch (polar residues) spans 145-154; sequence STTPSSLKMK. Over residues 201-212 the composition is skewed to basic residues; the sequence is KRQRQNQQKKLR. Residues 213–240 show a composition bias toward basic and acidic residues; it reads AKEMQELADEEQRRRLAAHRKELHEANR. The span at 245–266 shows a compositional bias: polar residues; it reads LNNSSRSAYSYINNGQAGSSKG.

It localises to the cytoplasm. It is found in the membrane. This is an uncharacterized protein from Schizosaccharomyces pombe (strain 972 / ATCC 24843) (Fission yeast).